Consider the following 462-residue polypeptide: Glutamate--tRNA ligase (462 aa).

Residues 11 to 21 (PSPTGFIHLGN) carry the 'HIGH' region motif. The 'KMSKS' region signature appears at 243–247 (KMSKR). Lys246 contributes to the ATP binding site.

This sequence belongs to the class-I aminoacyl-tRNA synthetase family. Glutamate--tRNA ligase type 1 subfamily. As to quaternary structure, monomer.

The protein resides in the cytoplasm. It catalyses the reaction tRNA(Glu) + L-glutamate + ATP = L-glutamyl-tRNA(Glu) + AMP + diphosphate. In terms of biological role, catalyzes the attachment of glutamate to tRNA(Glu) in a two-step reaction: glutamate is first activated by ATP to form Glu-AMP and then transferred to the acceptor end of tRNA(Glu). The polypeptide is Glutamate--tRNA ligase (Albidiferax ferrireducens (strain ATCC BAA-621 / DSM 15236 / T118) (Rhodoferax ferrireducens)).